Here is a 328-residue protein sequence, read N- to C-terminus: Biotin synthase (328 aa).

A Radical SAM core domain is found at 41 to 260 (TAIETASLLS…VALARILMPA (220 aa)). [4Fe-4S] cluster contacts are provided by cysteine 56, cysteine 60, and cysteine 63. [2Fe-2S] cluster-binding residues include cysteine 100, cysteine 131, cysteine 191, and arginine 264.

This sequence belongs to the radical SAM superfamily. Biotin synthase family. Homodimer. The cofactor is [4Fe-4S] cluster. [2Fe-2S] cluster serves as cofactor.

The enzyme catalyses (4R,5S)-dethiobiotin + (sulfur carrier)-SH + 2 reduced [2Fe-2S]-[ferredoxin] + 2 S-adenosyl-L-methionine = (sulfur carrier)-H + biotin + 2 5'-deoxyadenosine + 2 L-methionine + 2 oxidized [2Fe-2S]-[ferredoxin]. It participates in cofactor biosynthesis; biotin biosynthesis; biotin from 7,8-diaminononanoate: step 2/2. Catalyzes the conversion of dethiobiotin (DTB) to biotin by the insertion of a sulfur atom into dethiobiotin via a radical-based mechanism. The polypeptide is Biotin synthase (Cereibacter sphaeroides (strain ATCC 17023 / DSM 158 / JCM 6121 / CCUG 31486 / LMG 2827 / NBRC 12203 / NCIMB 8253 / ATH 2.4.1.) (Rhodobacter sphaeroides)).